The sequence spans 230 residues: 6-carboxyhexanoate--CoA ligase (230 aa).

It belongs to the BioW family. As to quaternary structure, homodimer. Requires Mg(2+) as cofactor.

It carries out the reaction heptanedioate + ATP + CoA = 6-carboxyhexanoyl-CoA + AMP + diphosphate. It participates in metabolic intermediate metabolism; pimeloyl-CoA biosynthesis; pimeloyl-CoA from pimelate: step 1/1. Catalyzes the transformation of pimelate into pimeloyl-CoA with concomitant hydrolysis of ATP to AMP. This Staphylococcus aureus (strain MSSA476) protein is 6-carboxyhexanoate--CoA ligase.